Here is a 312-residue protein sequence, read N- to C-terminus: Olfactory receptor 2B8 (312 aa).

The Extracellular segment spans residues 1 to 25 (MDQKNGSSFTGFILLGFSDRPQLEL). N5 carries an N-linked (GlcNAc...) asparagine glycan. A helical transmembrane segment spans residues 26–49 (VLFVVLLIFYIFTLLGNKTIIVLS). Residues 50-57 (HLDPHLHT) are Cytoplasmic-facing. The chain crosses the membrane as a helical span at residues 58–79 (PMYFFFSNLSFLDLCYTTGIVP). The Extracellular portion of the chain corresponds to 80–100 (QLLVNLRGADKSISYGGCVVQ). A disulfide bond links C97 and C189. The chain crosses the membrane as a helical span at residues 101–120 (LYISLGLGSTECVLLGVMVF). The Cytoplasmic segment spans residues 121–139 (DRYAAVCRPLHYTVVMHPC). A helical transmembrane segment spans residues 140-158 (LYVLMASTSWVIGFANSLL). Topologically, residues 159–195 (QTVLILLLTLCGRNKLEHFLCEVPPLLKLACVDTTMN) are extracellular. N195 carries N-linked (GlcNAc...) asparagine glycosylation. Residues 196 to 219 (ESELFFVSVIILLVPVALIIFSYS) traverse the membrane as a helical segment. The Cytoplasmic portion of the chain corresponds to 220–236 (QIVRAVMRIKLATGQRK). A helical membrane pass occupies residues 237-259 (VFGTCGSHLTVVSLFYGTAIYAY). Over 260 to 272 (LQPGNNYSQDQGK) the chain is Extracellular. N265 is a glycosylation site (N-linked (GlcNAc...) asparagine). The helical transmembrane segment at 273–292 (FISLFYTIITPMINPLIYTL) threads the bilayer. Residues 293–312 (RNKDVKGALKKVLWKNYDSR) lie on the Cytoplasmic side of the membrane.

The protein belongs to the G-protein coupled receptor 1 family.

The protein localises to the cell membrane. Odorant receptor. The sequence is that of Olfactory receptor 2B8 from Homo sapiens (Human).